The sequence spans 743 residues: Putative pentatricopeptide repeat-containing protein At1g68930 (743 aa).

PPR repeat units lie at residues 40-70 (ETFL…IPQP), 71-101 (NLFS…LPDR), 102-132 (DGVT…MMRD), 138-172 (TRVT…GFES), 173-203 (YLLV…LDDR), 204-233 (NTVM…GMEK), 234-268 (DSVS…GLKM), 269-303 (DQYP…NFQD), 304-334 (HIYV…MKQK), 335-369 (NVVS…GIDP), 370-404 (DHYT…GLIH), 405-435 (YVTV…MNVR), 436-470 (DAVS…GLKP), 471-506 (DGVT…GIVP), and 507-537 (SIGH…MPFP). The type E motif stretch occupies residues 542-617 (GWTTLLSACR…EPGQSWIKWK (76 aa)). The segment at 618 to 648 (GKLHSFSADDESSPYLDQIYAKLEELNNKII) is type E(+) motif. The segment at 649–743 (DNGYKPDTSF…DGTCSCGDFW (95 aa)) is type DYW motif.

This sequence belongs to the PPR family. PCMP-H subfamily.

This Arabidopsis thaliana (Mouse-ear cress) protein is Putative pentatricopeptide repeat-containing protein At1g68930 (PCMP-H22).